Reading from the N-terminus, the 308-residue chain is Putative mitochondrial transporter UCP3 (308 aa).

Topologically, residues 1-10 (MVGLKPPEVP) are mitochondrial intermembrane. A helical transmembrane segment spans residues 11 to 32 (PTTAVKLLGAGTAACFADLLTF). Solcar repeat units lie at residues 11–102 (PTTA…VKQL), 111–202 (SSIT…IKEK), and 211–296 (DNLP…LKRA). Residues 33-73 (PLDTAKVRLQIQGENQAARSAQYRGVLGTILTMVRNEGPRS) lie on the Mitochondrial matrix side of the membrane. The helical transmembrane segment at 74–96 (PYNGLVAGLQRQMSFASIRIGLY) threads the bilayer. Over 97–116 (DSVKQLYTPKGSDHSSITTR) the chain is Mitochondrial intermembrane. Residues 117–133 (ILAGCTTGAMAVTCAQP) form a helical membrane-spanning segment. The Mitochondrial matrix segment spans residues 134–179 (TDVVKVRFQASIHAGPRSNRKYSGTMDAYRTIAREEGVRGLWKGIL). A helical transmembrane segment spans residues 180–196 (PNITRNAIVNCAEMVTY). The Mitochondrial intermembrane segment spans residues 197–213 (DVIKEKVLDYHLLTDNL). The chain crosses the membrane as a helical span at residues 214-233 (PCHFVSAFGAGFCATVVASP). At 234-267 (VDVVKTRYMNSPPGQYQNPLDCMLKMVTQEGPTA) the chain is on the mitochondrial matrix side. The chain crosses the membrane as a helical span at residues 268-290 (FYKGFTPSFLRLGSWNVVMFVSY). The interval 275-297 (SFLRLGSWNVVMFVSYEQLKRAL) is purine nucleotide binding. Residues 291-308 (EQLKRALMKVQMLRESPF) lie on the Mitochondrial intermembrane side of the membrane.

This sequence belongs to the mitochondrial carrier (TC 2.A.29) family. In terms of assembly, interacts with HAX1; the interaction is direct and calcium-dependent.

The protein resides in the mitochondrion inner membrane. Putative transmembrane transporter that plays a role in mitochondrial metabolism via an as yet unclear mechanism. Originally, this mitochondrial protein was thought to act as a proton transmembrane transporter from the mitochondrial intermembrane space into the matrix, causing proton leaks through the inner mitochondrial membrane, thereby uncoupling mitochondrial membrane potential generation from ATP synthesis. However, this function is controversial and uncoupling may not be the function, or at least not the main function, but rather a consequence of more conventional metabolite transporter activity. The chain is Putative mitochondrial transporter UCP3 from Sus scrofa (Pig).